The sequence spans 388 residues: Na(+)/H(+) antiporter NhaA (388 aa).

11 helical membrane passes run G14–T34, M59–V79, A95–F115, G125–G145, I154–F174, L179–L199, V219–L239, V254–V274, I292–L312, I328–L348, and W360–L380.

It belongs to the NhaA Na(+)/H(+) (TC 2.A.33) antiporter family.

The protein resides in the cell inner membrane. It catalyses the reaction Na(+)(in) + 2 H(+)(out) = Na(+)(out) + 2 H(+)(in). Its function is as follows. Na(+)/H(+) antiporter that extrudes sodium in exchange for external protons. The protein is Na(+)/H(+) antiporter NhaA of Salmonella choleraesuis (strain SC-B67).